We begin with the raw amino-acid sequence, 889 residues long: Putative receptor-like protein kinase At3g46340 (889 aa).

A signal peptide spans 1–25; that stretch reads MEFPHSVLLVVLIIATFAISNLVQA. Residues 26–514 are Extracellular-facing; sequence EEDQEGFISL…VITKKKFPVM (489 aa). N-linked (GlcNAc...) asparagine glycosylation is found at Asn-185, Asn-239, Asn-259, Asn-292, Asn-316, Asn-342, Asn-366, Asn-419, Asn-435, Asn-448, Asn-467, and Asn-474. LRR repeat units follow at residues 414–437, 438–460, and 462–483; these read RITS…QNLT, HLDK…LASM, and SLSF…ALLK. The chain crosses the membrane as a helical span at residues 515–535; the sequence is IVALVSSAVVVILVVLVLIFV. The Cytoplasmic segment spans residues 536–889; sequence FKKKKPSNLE…FDTKAVPSAR (354 aa). A disordered region spans residues 544 to 566; that stretch reads LEDLPPSSNTPRENITSTSISDT. The Protein kinase domain occupies 585 to 874; sequence KNLQRPLGEG…TQGMDSHSSF (290 aa). ATP contacts are provided by residues 591-599 and Lys-614; that span reads LGEGGFGVV. Tyr-659 is subject to Phosphotyrosine. The active-site Proton acceptor is the Asp-711. Ser-745 bears the Phosphoserine mark. Phosphothreonine occurs at positions 746 and 751. Tyr-759 is subject to Phosphotyrosine. The tract at residues 863–889 is disordered; it reads NKTQGMDSHSSFEQSMSFDTKAVPSAR. Over residues 864–880 the composition is skewed to polar residues; sequence KTQGMDSHSSFEQSMSF.

This sequence belongs to the protein kinase superfamily. Ser/Thr protein kinase family.

It localises to the cell membrane. The enzyme catalyses L-seryl-[protein] + ATP = O-phospho-L-seryl-[protein] + ADP + H(+). It catalyses the reaction L-threonyl-[protein] + ATP = O-phospho-L-threonyl-[protein] + ADP + H(+). In Arabidopsis thaliana (Mouse-ear cress), this protein is Putative receptor-like protein kinase At3g46340.